The chain runs to 397 residues: Phosphoglycerate kinase (397 aa).

Substrate is bound by residues 21 to 23 (DFN), R37, 60 to 63 (HLGR), R119, and R152. ATP contacts are provided by residues K203, G294, E325, and 354 to 357 (GGDS).

The protein belongs to the phosphoglycerate kinase family. Monomer.

Its subcellular location is the cytoplasm. The catalysed reaction is (2R)-3-phosphoglycerate + ATP = (2R)-3-phospho-glyceroyl phosphate + ADP. It participates in carbohydrate degradation; glycolysis; pyruvate from D-glyceraldehyde 3-phosphate: step 2/5. The chain is Phosphoglycerate kinase from Prosthecochloris aestuarii (strain DSM 271 / SK 413).